A 266-amino-acid polypeptide reads, in one-letter code: Methylsterol monooxygenase 2-2 (266 aa).

Helical transmembrane passes span 24–44 (IGSF…FIFL), 71–91 (RLLL…YPVF), and 107–127 (EVSA…YWGH). One can recognise a Fatty acid hydroxylase domain in the interval 113–247 (LFYFIIEDFV…FVYMDWIFGT (135 aa)). The Histidine box-1 motif lies at 127–131 (HRILH). A Histidine box-2 motif is present at residues 140–144 (HSVHH). Residues 162–182 (ILFLGFATIVGPALTGPHLIT) traverse the membrane as a helical segment. The short motif at 219–225 (FHDYHHR) is the Histidine box-3 element.

Belongs to the sterol desaturase family. Requires Fe cation as cofactor. Expressed in shoots, roots, siliques and flowers, and, slightly, in developing seeds.

Its subcellular location is the endoplasmic reticulum membrane. The enzyme catalyses 4,4-dimethyl-5alpha-cholest-7-en-3beta-ol + 6 Fe(II)-[cytochrome b5] + 3 O2 + 5 H(+) = 4alpha-carboxy-4beta-methyl-5alpha-cholest-7-ene-3beta-ol + 6 Fe(III)-[cytochrome b5] + 4 H2O. The catalysed reaction is 24-methylidenelophenol + 6 Fe(II)-[cytochrome b5] + 3 O2 + 5 H(+) = 4alpha-carboxy-ergosta-7,24(24(1))-dien-3beta-ol + 6 Fe(III)-[cytochrome b5] + 4 H2O. Its function is as follows. Non-heme iron oxygenase involved in sterols biosynthesis by catalyzing the removal of the second methyl group at the C-4 position. 24-ethylidenelophenol and 24-ethyllophenol are the preferred substrates. Together with SMO2-1, required during embryogenesis, probably by maintaining sterols and auxin homeostasis. The chain is Methylsterol monooxygenase 2-2 from Arabidopsis thaliana (Mouse-ear cress).